The following is a 475-amino-acid chain: GDP-fucose protein O-fucosyltransferase 3 (475 aa).

The Cytoplasmic segment spans residues 1–8 (MVRMRRKR). The chain crosses the membrane as a helical; Signal-anchor for type II membrane protein span at residues 9–29 (LWASCICFAAFFFLLVTLQVI). At 30 to 475 (TELGNSENKA…QEFWMLVFKQ (446 aa)) the chain is on the lumenal side. 3 N-linked (GlcNAc...) asparagine glycosylation sites follow: Asn-107, Asn-165, and Asn-315. A disulfide bond links Cys-386 and Cys-389. Asn-462 carries an N-linked (GlcNAc...) asparagine glycan.

The protein belongs to the glycosyltransferase 10 family.

The protein resides in the endoplasmic reticulum membrane. The catalysed reaction is L-threonyl-[protein] + GDP-beta-L-fucose = 3-O-(alpha-L-fucosyl)-L-threonyl-[protein] + GDP + H(+). It catalyses the reaction L-seryl-[protein] + GDP-beta-L-fucose = 3-O-(alpha-L-fucosyl)-L-seryl-[protein] + GDP + H(+). It functions in the pathway protein modification; protein glycosylation. Functionally, protein O-fucosyltransferase that specifically catalyzes O-fucosylation of serine or threonine residues in EMI domains of target proteins. Attaches fucose through an O-glycosidic linkage. O-fucosylation of EMI domain-containing proteins may be required for facilitating protein folding and secretion. This Gallus gallus (Chicken) protein is GDP-fucose protein O-fucosyltransferase 3 (FUT10).